The primary structure comprises 507 residues: uncharacterized protein (507 aa).

3 disordered regions span residues 91–162 (NEKT…KKLL), 174–255 (EKLQ…QQQQ), and 309–422 (KRKL…NYST). The span at 116-143 (DSSESDSSESESDSSESESESESNETSE) shows a compositional bias: acidic residues. A compositionally biased stretch (low complexity) spans 144-155 (NESSSSSEPESS). Over residues 174–193 (EKLQQEQQKQKEAQKPKEKP) the composition is skewed to basic and acidic residues. 3 stretches are compositionally biased toward low complexity: residues 194–236 (QQQQ…QQIE), 243–255 (PQQQQQQQQQQQQ), and 313–350 (QSQLDNDGLANKNDNNSNNNNYNNSNNNDSNNNNTNKP). Over residues 351 to 360 (LSKRQKKLLK) the composition is skewed to basic residues. Residues 378 to 409 (NNKNDNSTNDSNNNNDNNNNNKNDTNDSNNDD) show a composition bias toward low complexity.

This is an uncharacterized protein from Dictyostelium discoideum (Social amoeba).